We begin with the raw amino-acid sequence, 168 residues long: Lipoprotein signal peptidase (168 aa).

The next 2 helical transmembrane spans lie at 57-77 (PKEV…LYVF) and 86-106 (FILP…DRIT). Catalysis depends on residues Asp112 and Asp138. A helical transmembrane segment spans residues 131–151 (WPIFNIADSAITIGACLLILF).

The protein belongs to the peptidase A8 family.

It is found in the cell inner membrane. It catalyses the reaction Release of signal peptides from bacterial membrane prolipoproteins. Hydrolyzes -Xaa-Yaa-Zaa-|-(S,diacylglyceryl)Cys-, in which Xaa is hydrophobic (preferably Leu), and Yaa (Ala or Ser) and Zaa (Gly or Ala) have small, neutral side chains.. It participates in protein modification; lipoprotein biosynthesis (signal peptide cleavage). This protein specifically catalyzes the removal of signal peptides from prolipoproteins. This Chlorobium phaeobacteroides (strain DSM 266 / SMG 266 / 2430) protein is Lipoprotein signal peptidase.